The sequence spans 124 residues: Succinate dehydrogenase cytochrome b556 subunit (124 aa).

Residues M1–L29 are Cytoplasmic-facing. The helical transmembrane segment at S30–K55 threads the bilayer. At Y56–C67 the chain is on the periplasmic side. Residues I68–I88 traverse the membrane as a helical segment. H83 contributes to the heme binding site. Residues R89–A103 are Cytoplasmic-facing. The helical transmembrane segment at V104–V124 threads the bilayer.

Belongs to the cytochrome b560 family. Part of an enzyme complex containing four subunits: a flavoprotein, an iron-sulfur protein, plus two membrane-anchoring proteins, SdhC and SdhD. The complex can form homotrimers. The cofactor is heme.

The protein resides in the cell inner membrane. It functions in the pathway carbohydrate metabolism; tricarboxylic acid cycle. In terms of biological role, membrane-anchoring subunit of succinate dehydrogenase (SDH). In Rickettsia prowazekii (strain Madrid E), this protein is Succinate dehydrogenase cytochrome b556 subunit (sdhC).